Here is a 503-residue protein sequence, read N- to C-terminus: Probable inactive beta-glucosidase 33 (503 aa).

The signal sequence occupies residues 1-30 (MATGELALVSSLFIVVVFLLLGAVAREASA). A beta-D-glucoside contacts are provided by residues glutamine 50, histidine 150, and 195–196 (NQ). Cysteine 215 and cysteine 223 are oxidised to a cystine. An N-linked (GlcNAc...) asparagine glycan is attached at asparagine 222. Residues tyrosine 339 and glutamate 399 each contribute to the a beta-D-glucoside site. Residue glutamate 399 is the Nucleophile of the active site. N-linked (GlcNAc...) asparagine glycosylation is present at asparagine 436. A beta-D-glucoside-binding positions include tryptophan 446, 453-454 (EF), and phenylalanine 462.

Belongs to the glycosyl hydrolase 1 family.

The polypeptide is Probable inactive beta-glucosidase 33 (BGLU33) (Oryza sativa subsp. japonica (Rice)).